We begin with the raw amino-acid sequence, 200 residues long: Elongation factor Ts (200 aa).

Residues 80–83 form an involved in Mg(2+) ion dislocation from EF-Tu region; it reads TDFV.

The protein belongs to the EF-Ts family.

The protein resides in the cytoplasm. Its function is as follows. Associates with the EF-Tu.GDP complex and induces the exchange of GDP to GTP. It remains bound to the aminoacyl-tRNA.EF-Tu.GTP complex up to the GTP hydrolysis stage on the ribosome. The chain is Elongation factor Ts from Caldanaerobacter subterraneus subsp. tengcongensis (strain DSM 15242 / JCM 11007 / NBRC 100824 / MB4) (Thermoanaerobacter tengcongensis).